A 426-amino-acid chain; its full sequence is Histone-binding protein RBBP7 (426 aa).

WD repeat units follow at residues 47 to 123 (QWLP…KINH), 129 to 174 (RARY…LRLR), 182 to 218 (GLSW…KIVD), 229 to 270 (VVED…HSVD), 276 to 313 (VNCL…LHSF), 319 to 370 (EIFQ…LFIH), and 377 to 404 (ISDF…VWQM).

This sequence belongs to the WD repeat RBAP46/RBAP48/MSI1 family. In terms of assembly, binds directly to helix 1 of the histone fold of histone H4, a region that is not accessible when H4 is in chromatin.

Its subcellular location is the nucleus. In terms of biological role, core histone-binding subunit that may target chromatin remodeling factors, histone acetyltransferases and histone deacetylases to their histone substrates in a manner that is regulated by nucleosomal DNA. Component of several complexes which regulate chromatin metabolism. The chain is Histone-binding protein RBBP7 (rbbp7) from Danio rerio (Zebrafish).